A 133-amino-acid polypeptide reads, in one-letter code: Ribonuclease VapC28 (133 aa).

The PINc domain occupies 1–124; sequence MIVDTSAIIA…LWKGNDFGHT (124 aa). Mg(2+) contacts are provided by Asp-4 and Asp-100.

Belongs to the PINc/VapC protein family. It depends on Mg(2+) as a cofactor.

Functionally, toxic component of a type II toxin-antitoxin (TA) system. An RNase. Upon expression in M.smegmatis inhibits colony formation. Its toxic effect is neutralized by coexpression with cognate antitoxin VapB28. This Mycobacterium tuberculosis (strain ATCC 25618 / H37Rv) protein is Ribonuclease VapC28.